Consider the following 245-residue polypeptide: Alpha carbonic anhydrase 2 (245 aa).

The signal sequence occupies residues 1 to 23 (MDKISIRCFIFLVLTSFVTTVSC). Residues 37 to 245 (HEFSYEWNQE…THRYFLLFFT (209 aa)) form the Alpha-carbonic anhydrase domain. An intrachain disulfide couples C62 to C222. N95 is a glycosylation site (N-linked (GlcNAc...) asparagine). H103 acts as the Proton acceptor in catalysis. Residue N120 is glycosylated (N-linked (GlcNAc...) asparagine). Zn(2+) is bound by residues H130, H132, and H149. N156 carries N-linked (GlcNAc...) asparagine glycosylation. 218–219 (TT) contributes to the substrate binding site.

This sequence belongs to the alpha-class carbonic anhydrase family. Zn(2+) serves as cofactor. Post-translationally, N-glycosylated. In terms of tissue distribution, expressed in stems and roots.

It localises to the plastid. It is found in the chloroplast stroma. It carries out the reaction hydrogencarbonate + H(+) = CO2 + H2O. Functionally, reversible hydration of carbon dioxide. The chain is Alpha carbonic anhydrase 2 (ACA2) from Arabidopsis thaliana (Mouse-ear cress).